A 550-amino-acid polypeptide reads, in one-letter code: Natural resistance-associated macrophage protein 1 (550 aa).

The disordered stretch occupies residues 1 to 45; sequence MTGDKGPQRLSGSSYGSISSPTSPTSPGPQQAPPRETYLSEKIPI. At 1–58 the chain is on the cytoplasmic side; that stretch reads MTGDKGPQRLSGSSYGSISSPTSPTSPGPQQAPPRETYLSEKIPIPDTKPGTFSLRKL. Residues 11-23 show a composition bias toward low complexity; that stretch reads SGSSYGSISSPTS. The helical transmembrane segment at 59 to 76 threads the bilayer; the sequence is WAFTGPGFLMSIAFLDPG. Topologically, residues 77–85 are extracellular; that stretch reads NIESDLQAG. The chain crosses the membrane as a helical span at residues 86 to 105; that stretch reads AVAGFKLLWVLLWATVLGLL. The Cytoplasmic portion of the chain corresponds to 106-142; it reads CQRLAARLGVVTGKDLGEVCHLYYPKVPRTVLWLTIE. The chain crosses the membrane as a helical span at residues 143–163; the sequence is LAIVGSDMQEVIGTAIAFNLL. Residues 164-167 are Extracellular-facing; it reads SAGR. A helical membrane pass occupies residues 168–187; the sequence is IPLWGGVLITIVDTFFFLFL. Topologically, residues 188–196 are cytoplasmic; it reads DNYGLRKLE. Residues 197–217 traverse the membrane as a helical segment; sequence AFFGLLITIMALTFGYEYVVA. The Extracellular segment spans residues 218-240; it reads RPEQGALLRGLFLPSCPGCGHPE. The helical transmembrane segment at 241–259 threads the bilayer; sequence LLQAVGIVGAIIMPHNIYL. Topologically, residues 260 to 287 are cytoplasmic; that stretch reads HSALVKSREIDRARRADIREANMYFLIE. Residues 288-307 traverse the membrane as a helical segment; it reads ATIALSVSFIINLFVMAVFG. The Extracellular segment spans residues 308-349; that stretch reads QAFYQKTNQAAFNICANSSLHDYAKIFPMNNATVAVDIYQGG. N-linked (GlcNAc...) asparagine glycosylation is found at Asn324 and Asn338. A helical membrane pass occupies residues 350-369; sequence VILGCLFGPAALYIWAIGLL. Topologically, residues 370 to 400 are cytoplasmic; the sequence is AAGQSSTMTGTYAGQFVMEGFLRLRWSRFAR. A helical membrane pass occupies residues 401–418; it reads VLLTRSCAILPTVLVAVF. At 419-429 the chain is on the extracellular side; the sequence is RDLRDLSGLND. A helical transmembrane segment spans residues 430-450; it reads LLNVLQSLLLPFAVLPILTFT. Over 451–466 the chain is Cytoplasmic; sequence SMPTLMQEFANGLLNK. Residues 467–488 form a helical membrane-spanning segment; that stretch reads VVTSSIMVLVCAINLYFVVSYL. Topologically, residues 489–496 are extracellular; it reads PSLPHPAY. Residues 497–516 traverse the membrane as a helical segment; it reads FGLAALLAAAYLGLSTYLVW. Topologically, residues 517–550 are cytoplasmic; it reads TCCLAHGATFLAHSSHHHFLYGLLEEDQKGETSG.

It belongs to the NRAMP family. As to expression, macrophages; peripheral blood leukocytes, lung, spleen and liver.

It localises to the late endosome membrane. The protein resides in the lysosome membrane. The catalysed reaction is Zn(2+)(in) + H(+)(out) = Zn(2+)(out) + H(+)(in). It carries out the reaction Fe(2+)(in) + H(+)(out) = Fe(2+)(out) + H(+)(in). The enzyme catalyses Mn(2+)(in) + H(+)(out) = Mn(2+)(out) + H(+)(in). Functionally, macrophage-specific antiporter that fluxes metal ions in either direction against a proton gradient. Localized to late endosomal lysosomal membranes, delivers bivalent cations from the cytosol into these acidic compartments where they may directly affect antimicrobial activity. Involved in iron metabolism and host natural resistance to infection with intracellular parasites. Pathogen resistance involves sequestration of Fe(2+) and Mn(2+), cofactors of both prokaryotic and eukaryotic catalases and superoxide dismutases, not only to protect the macrophage against its own generation of reactive oxygen species, but to deny the cations to the pathogen for synthesis of its protective enzymes. The polypeptide is Natural resistance-associated macrophage protein 1 (Homo sapiens (Human)).